The following is a 270-amino-acid chain: MYHVYLLSDATGETVERVARAALTQFRDVDIRLRRMGQIRNREDILRALDEVDRAPGIIFYTLVNTELAQFVRNEVEARQLEAVDLITPLLYKLAEFLEMRPQKLPGLQYEMNSEYYRRMEAVDFTVKQDDGQEPRNLHKADIVLIGVSRSSKTPLSMYLAHKGYKVANVPIIQGIDPPGELEEVEPERVVGLIIDTQRLVDIRSARLRNLRQSPRGSYADYRQVEEELAYCRRFYRAHPAWLVIDVTNKSVEESAAEILSRLHGDIRHD.

Position 147–154 (147–154 (GVSRSSKT)) interacts with ADP.

This sequence belongs to the pyruvate, phosphate/water dikinase regulatory protein family. PDRP subfamily.

The enzyme catalyses N(tele)-phospho-L-histidyl/L-threonyl-[pyruvate, phosphate dikinase] + ADP = N(tele)-phospho-L-histidyl/O-phospho-L-threonyl-[pyruvate, phosphate dikinase] + AMP + H(+). It carries out the reaction N(tele)-phospho-L-histidyl/O-phospho-L-threonyl-[pyruvate, phosphate dikinase] + phosphate + H(+) = N(tele)-phospho-L-histidyl/L-threonyl-[pyruvate, phosphate dikinase] + diphosphate. Its function is as follows. Bifunctional serine/threonine kinase and phosphorylase involved in the regulation of the pyruvate, phosphate dikinase (PPDK) by catalyzing its phosphorylation/dephosphorylation. This Citrifermentans bemidjiense (strain ATCC BAA-1014 / DSM 16622 / JCM 12645 / Bem) (Geobacter bemidjiensis) protein is Putative pyruvate, phosphate dikinase regulatory protein.